The chain runs to 284 residues: MSLNAKNKRSLDYCLQWPDFCQSKKASKLIVKLNKKHPKRRHYKDPEAKHYDVLFKGVCKAVTNGITNQLICDHIDLKIAPGEFVVILGKSGSGKTSLLSLISALDRPTSGVSFVCGRSTICCNDAQLTSLRNKNVGYIFQQYGLLRDLNVDDNIKLAVPFKKRHNNNLEELLERLELKEHRNKKITKLSGGQQQRVAIARALIKEPRILFGDEPTGAVNVDISKKILQFFVEYNRDKGTTIVLVTHNEKIVELAKRVIKIHDGKIVADYLNQRPKTINEINWV.

Residues 53–284 (VLFKGVCKAV…PKTINEINWV (232 aa)) enclose the ABC transporter domain. Position 89–96 (89–96 (GKSGSGKT)) interacts with ATP.

The protein belongs to the ABC transporter superfamily.

This Mycoplasma pneumoniae (strain ATCC 29342 / M129 / Subtype 1) (Mycoplasmoides pneumoniae) protein is Putative ABC transporter ATP-binding protein MG468.1 homolog.